The sequence spans 199 residues: Alkyl hydroperoxide reductase C (199 aa).

A Thioredoxin domain is found at 2–163; that stretch reads VLVTYPAPDF…TLRMIDALHF (162 aa). Catalysis depends on Cys50, which acts as the Cysteine sulfenic acid (-SOH) intermediate.

Belongs to the peroxiredoxin family. AhpC/Prx1 subfamily. Homodimer; disulfide-linked, upon oxidation. 5 homodimers assemble to form a ring-like decamer.

The protein localises to the cytoplasm. The enzyme catalyses a hydroperoxide + NADH + H(+) = an alcohol + NAD(+) + H2O. Functionally, thiol-specific peroxidase that catalyzes the reduction of hydrogen peroxide and organic hydroperoxides to water and alcohols, respectively. Plays a role in cell protection against oxidative stress by detoxifying peroxides. This is Alkyl hydroperoxide reductase C from Buchnera aphidicola subsp. Baizongia pistaciae (strain Bp).